The following is a 477-amino-acid chain: Protein AC142 (477 aa).

It is found in the host cytoplasm. It localises to the host nucleus. Its subcellular location is the virion. Functionally, required for occlusion-derived virus (ODV) envelopment and subsequent embedding of virions into polyhedra. In Autographa californica nuclear polyhedrosis virus (AcMNPV), this protein is Protein AC142 (ORF142).